The sequence spans 524 residues: RNA-splicing ligase RtcB homolog 2 (524 aa).

5 residues coordinate Mn(2+): Asp141, Cys144, His249, His281, and His372. GMP is bound at residue 248–252; it reads NHYLE. GMP is bound by residues 372-373, 421-424, Ser428, 447-450, and Lys523; these read HN, GGSM, and HGAG. His447 serves as the catalytic GMP-histidine intermediate.

The protein belongs to the RtcB family. In terms of assembly, catalytic component of the tRNA-splicing ligase complex. Requires Mn(2+) as cofactor.

It catalyses the reaction a 3'-end 3'-phospho-ribonucleotide-RNA + a 5'-end dephospho-ribonucleoside-RNA + GTP = a ribonucleotidyl-ribonucleotide-RNA + GMP + diphosphate. It carries out the reaction a 3'-end 2',3'-cyclophospho-ribonucleotide-RNA + a 5'-end dephospho-ribonucleoside-RNA + GTP + H2O = a ribonucleotidyl-ribonucleotide-RNA + GMP + diphosphate + H(+). Catalytic subunit of the tRNA-splicing ligase complex that acts by directly joining spliced tRNA halves to mature-sized tRNAs by incorporating the precursor-derived splice junction phosphate into the mature tRNA as a canonical 3',5'-phosphodiester. May act as an RNA ligase with broad substrate specificity, and may function toward other RNAs. In Entamoeba dispar (strain ATCC PRA-260 / SAW760), this protein is RNA-splicing ligase RtcB homolog 2.